The following is a 293-amino-acid chain: Shikimate kinase (293 aa).

Pro87–Ala97 provides a ligand contact to ATP.

The protein belongs to the GHMP kinase family. Archaeal shikimate kinase subfamily.

The protein resides in the cytoplasm. It catalyses the reaction shikimate + ATP = 3-phosphoshikimate + ADP + H(+). The protein operates within metabolic intermediate biosynthesis; chorismate biosynthesis; chorismate from D-erythrose 4-phosphate and phosphoenolpyruvate: step 5/7. The polypeptide is Shikimate kinase (Methanosarcina mazei (strain ATCC BAA-159 / DSM 3647 / Goe1 / Go1 / JCM 11833 / OCM 88) (Methanosarcina frisia)).